We begin with the raw amino-acid sequence, 490 residues long: Betaine aldehyde dehydrogenase (490 aa).

The K(+) site is built by Thr-26, Ile-27, and Asp-93. 150-152 (GAW) provides a ligand contact to NAD(+). Lys-162 acts as the Charge relay system in catalysis. 176–179 (KPSE) is an NAD(+) binding site. Residue Val-180 participates in K(+) binding. 230–233 (GVAS) lines the NAD(+) pocket. Leu-246 provides a ligand contact to K(+). Catalysis depends on Glu-252, which acts as the Proton acceptor. 3 residues coordinate NAD(+): Gly-254, Cys-286, and Glu-387. Cys-286 serves as the catalytic Nucleophile. Cys-286 carries the cysteine sulfenic acid (-SOH) modification. K(+) contacts are provided by Lys-457 and Gly-460. The active-site Charge relay system is Glu-464.

This sequence belongs to the aldehyde dehydrogenase family. As to quaternary structure, dimer of dimers. Requires K(+) as cofactor.

It carries out the reaction betaine aldehyde + NAD(+) + H2O = glycine betaine + NADH + 2 H(+). Its pathway is amine and polyamine biosynthesis; betaine biosynthesis via choline pathway; betaine from betaine aldehyde: step 1/1. Involved in the biosynthesis of the osmoprotectant glycine betaine. Catalyzes the irreversible oxidation of betaine aldehyde to the corresponding acid. The chain is Betaine aldehyde dehydrogenase from Escherichia coli O6:K15:H31 (strain 536 / UPEC).